Here is a 267-residue protein sequence, read N- to C-terminus: Orotidine 5'-phosphate decarboxylase (267 aa).

Substrate is bound by residues Asp38, 60–62, 92–101, Tyr218, and Arg236; these read KTH and DRKFADIGNT. The active-site Proton donor is Lys94.

The protein belongs to the OMP decarboxylase family.

The catalysed reaction is orotidine 5'-phosphate + H(+) = UMP + CO2. The protein operates within pyrimidine metabolism; UMP biosynthesis via de novo pathway; UMP from orotate: step 2/2. This chain is Orotidine 5'-phosphate decarboxylase (URA3), found in Debaryomyces hansenii (strain ATCC 36239 / CBS 767 / BCRC 21394 / JCM 1990 / NBRC 0083 / IGC 2968) (Yeast).